The sequence spans 340 residues: Phospho-N-acetylmuramoyl-pentapeptide-transferase (340 aa).

9 helical membrane passes run 24–44 (VPFG…LPVL), 69–89 (TMGG…GSGW), 95–115 (AVAL…WLVI), 129–149 (LLLQ…QGIP), 156–176 (GIGA…VLVG), 196–216 (ALVL…LVAF), 235–255 (LFMG…LALL), 260–280 (WALA…ILQV), and 316–336 (VVGC…AWWH).

Belongs to the glycosyltransferase 4 family. MraY subfamily. Requires Mg(2+) as cofactor.

The protein localises to the cell inner membrane. It catalyses the reaction UDP-N-acetyl-alpha-D-muramoyl-L-alanyl-gamma-D-glutamyl-meso-2,6-diaminopimeloyl-D-alanyl-D-alanine + di-trans,octa-cis-undecaprenyl phosphate = di-trans,octa-cis-undecaprenyl diphospho-N-acetyl-alpha-D-muramoyl-L-alanyl-D-glutamyl-meso-2,6-diaminopimeloyl-D-alanyl-D-alanine + UMP. It participates in cell wall biogenesis; peptidoglycan biosynthesis. In terms of biological role, catalyzes the initial step of the lipid cycle reactions in the biosynthesis of the cell wall peptidoglycan: transfers peptidoglycan precursor phospho-MurNAc-pentapeptide from UDP-MurNAc-pentapeptide onto the lipid carrier undecaprenyl phosphate, yielding undecaprenyl-pyrophosphoryl-MurNAc-pentapeptide, known as lipid I. This is Phospho-N-acetylmuramoyl-pentapeptide-transferase from Synechococcus sp. (strain JA-3-3Ab) (Cyanobacteria bacterium Yellowstone A-Prime).